The chain runs to 156 residues: E3 ubiquitin-protein ligase RNF181 (156 aa).

The segment at 79–120 (CPVCLLEFEEGETVRQLPCEHLFHSACILPWLGKTNSCPLCR) adopts an RING-type; atypical zinc-finger fold.

This sequence belongs to the RNF181 family.

The enzyme catalyses S-ubiquitinyl-[E2 ubiquitin-conjugating enzyme]-L-cysteine + [acceptor protein]-L-lysine = [E2 ubiquitin-conjugating enzyme]-L-cysteine + N(6)-ubiquitinyl-[acceptor protein]-L-lysine.. The protein operates within protein modification; protein ubiquitination. Functionally, E3 ubiquitin-protein ligase which accepts ubiquitin from an E2 ubiquitin-conjugating enzyme in the form of a thioester and then directly transfers the ubiquitin to targeted substrates. Catalyzes monoubiquitination of 26S proteasome subunit PSMC2/RPT1. This Xenopus laevis (African clawed frog) protein is E3 ubiquitin-protein ligase RNF181 (rnf181).